The chain runs to 265 residues: Transcription factor LBX1 (265 aa).

A compositionally biased stretch (basic and acidic residues) spans 1 to 20 (MTSKDEAKSSSVEERRRHAL). The interval 1–33 (MTSKDEAKSSSVEERRRHALDLLPPPANSNKPL) is disordered. Positions 125–184 (RRKSRTAFTNHQIYELEKRFLYQKYLSPADRDQIAQQLGLTNAQVITWFQNRRAKLKRDL) form a DNA-binding region, homeobox. The segment at 212–265 (EEETNSVRDDSRSRSPQLGLSGHMPLSPSSPLTEQHTSKECSEDEEDVEIDVDD) is disordered. Residues 253–265 (SEDEEDVEIDVDD) are compositionally biased toward acidic residues.

The protein resides in the nucleus. Functionally, transcription factor that controls hypaxial muscle development by down-regulating myod1 and cdkn1b/p27, thereby allowing myoblasts to proliferate before the onset of terminal differentiation. In Xenopus tropicalis (Western clawed frog), this protein is Transcription factor LBX1.